The chain runs to 201 residues: Pyridoxal 5'-phosphate synthase subunit PdxT (201 aa).

49–51 serves as a coordination point for L-glutamine; the sequence is GES. Cys-81 serves as the catalytic Nucleophile. Residues Arg-110 and 139–140 each bind L-glutamine; that span reads IR. Catalysis depends on charge relay system residues His-180 and Glu-182.

This sequence belongs to the glutaminase PdxT/SNO family. In terms of assembly, in the presence of PdxS, forms a dodecamer of heterodimers. Only shows activity in the heterodimer.

It carries out the reaction aldehydo-D-ribose 5-phosphate + D-glyceraldehyde 3-phosphate + L-glutamine = pyridoxal 5'-phosphate + L-glutamate + phosphate + 3 H2O + H(+). The catalysed reaction is L-glutamine + H2O = L-glutamate + NH4(+). It functions in the pathway cofactor biosynthesis; pyridoxal 5'-phosphate biosynthesis. Functionally, catalyzes the hydrolysis of glutamine to glutamate and ammonia as part of the biosynthesis of pyridoxal 5'-phosphate. The resulting ammonia molecule is channeled to the active site of PdxS. In Salinispora tropica (strain ATCC BAA-916 / DSM 44818 / JCM 13857 / NBRC 105044 / CNB-440), this protein is Pyridoxal 5'-phosphate synthase subunit PdxT.